Here is a 589-residue protein sequence, read N- to C-terminus: MKRVRTEQIQMAVSCYLKRRQYVDSDGPLKQGLRLSQTAEEMAANLTVQSESGCANIVSAAPCQAEPQQYEVQFGRLRNFLTDSDSQHSHEVMPLLYPLFVYLHLNLVQNSPKSTVESFYSRFHGMFLQNASQKDVIEQLQTTQTIQDILSNFKLRAFLDNKYVVRLQEDSYNYLIRYLQSDNNTALCKVLTLHIHLDVQPAKRTDYQLYASGSSSRSENNGLEPPDMPSPILQNEAALEVLQESIKRVKDGPPSLTTICFYAFYNTEQLLNTAEISPDSKLLAAGFDNSCIKLWSLRSKKLKSEPHQVDVSRIHLACDILEEEDDEDDNAGTEMKILRGHCGPVYSTRFLADSSGLLSCSEDMSIRYWDLGSFTNTVLYQGHAYPVWDLDISPYSLYFASGSHDRTARLWSFDRTYPLRIYAGHLADVDCVKFHPNSNYLATGSTDKTVRLWSAQQGNSVRLFTGHRGPVLSLAFSPNGKYLASAGEDQRLKLWDLASGTLYKELRGHTDNITSLTFSPDSGLIASASMDNSVRVWDIRNTYCSAPADGSSSELVGVYTGQMSNVLSVQFMACNLLLVTGITQENQEH.

Over residues 211-221 (ASGSSSRSENN) the composition is skewed to polar residues. The interval 211-230 (ASGSSSRSENNGLEPPDMPS) is disordered. 6 WD repeats span residues 266 to 305 (NTEQ…LKSE), 340 to 379 (GHCG…NTVL), 382 to 421 (GHAY…PLRI), 424 to 463 (GHLA…SVRL), 466 to 505 (GHRG…LYKE), and 508 to 547 (GHTD…CSAP).

It belongs to the WD repeat TAF5 family. In terms of assembly, the PCAF complex is composed of a number of TBP-associated factors (TAFS), such as TAF5, TAF5L, TAF6, TAF6L, TAF9, TAF10 and TAF12, PCAF, and also PCAF-associated factors (PAFs), such as TADA2L/ADA2, TADA3L/ADA3 and SPT3. Component of the STAGA transcription coactivator-HAT complex, at least composed of SUPT3H, GCN5L2, TAF5L, TAF6L, SUPT7L, TADA3L, TAD1L, TAF10, TAF12, TRRAP and TAF9.

The protein resides in the nucleus. Functionally, functions as a component of the PCAF complex. The PCAF complex is capable of efficiently acetylating histones in a nucleosomal context. The PCAF complex could be considered as the human version of the yeast SAGA complex. With TAF6L, acts as an epigenetic regulator essential for somatic reprogramming. Regulates target genes through H3K9ac deposition and MYC recruitment which trigger MYC regulatory network to orchestrate gene expression programs to control embryonic stem cell state. This is TAF5-like RNA polymerase II p300/CBP-associated factor-associated factor 65 kDa subunit 5L from Homo sapiens (Human).